The chain runs to 490 residues: Cruciferin BnC1 (490 aa).

The N-terminal stretch at Met1–Ala23 is a signal peptide. Cystine bridges form between Cys30–Cys63 and Cys106–Cys307. 2 consecutive Cupin type-1 domains span residues Leu35–Gln263 and Asp313–Arg462. Thr109 is subject to Phosphothreonine. Residues Ser113–Asp164 form a disordered region. The segment covering Ser122–Gly148 has biased composition (gly residues). Low complexity predominate over residues Gln149–Gly161. At Tyr330 the chain carries Phosphotyrosine. Ser332 is subject to Phosphoserine. Thr426 carries the post-translational modification Phosphothreonine.

Belongs to the 11S seed storage protein (globulins) family. In terms of assembly, hexamer; each subunit is composed of an acidic and a basic chain derived from a single precursor and linked by a disulfide bond.

This is a seed storage protein. This is Cruciferin BnC1 (BnC1) from Brassica napus (Rape).